We begin with the raw amino-acid sequence, 141 residues long: ATP synthase epsilon chain (141 aa).

Belongs to the ATPase epsilon chain family. F-type ATPases have 2 components, CF(1) - the catalytic core - and CF(0) - the membrane proton channel. CF(1) has five subunits: alpha(3), beta(3), gamma(1), delta(1), epsilon(1). CF(0) has three main subunits: a, b and c.

It is found in the cell inner membrane. In terms of biological role, produces ATP from ADP in the presence of a proton gradient across the membrane. The protein is ATP synthase epsilon chain of Teredinibacter turnerae (strain ATCC 39867 / T7901).